A 195-amino-acid polypeptide reads, in one-letter code: MARCKS-related protein (195 aa).

The interval 1-195 (MGSQSSKAPR…PTPASAEQNE (195 aa)) is disordered. Residue glycine 2 is the site of N-myristoyl glycine attachment. The residue at position 14 (threonine 14) is a Phosphothreonine. Positions 16-26 (EEAAGASPAKA) are enriched in low complexity. A phosphoserine mark is found at serine 22, serine 36, serine 41, and serine 48. The segment covering 53-64 (GTDEAAGATGDA) has biased composition (low complexity). Serine 71 carries the post-translational modification Phosphoserine. Residues 76–85 (AKGEVPPKET) are compositionally biased toward basic and acidic residues. Threonine 85 carries the post-translational modification Phosphothreonine. The segment covering 86–98 (PKKKKKFSFKKPF) has biased composition (basic residues). The interval 87 to 110 (KKKKKFSFKKPFKLSGLSFKRNRK) is effector domain involved in lipid-binding and calmodulin-binding. Phosphoserine occurs at positions 93, 101, 104, 119, 120, and 135. The residue at position 148 (threonine 148) is a Phosphothreonine. 3 positions are modified to phosphoserine: serine 151, serine 162, and serine 165. Low complexity predominate over residues 153–195 (EPQAKGAEASAASEEEAGPQATEPSTPSGPESGPTPASAEQNE). Phosphothreonine is present on residues threonine 178 and threonine 187.

Belongs to the MARCKS family. As to quaternary structure, binds to filamentous actin (F-actin), but not to monomeric G-actin, independently of its phosphorylation status. Phosphorylated. Phosphorylation at Ser-120 and Thr-178 is non-redundantly catalyzed by MAPK8 in vivo. Phosphorylation at Thr-148 is preferentially catalyzed by MAPK8 in vivo, but this modification can also be catalyzed by other kinases in the absence of MAPK8. May be phosphorylated by protein kinase C, which disrupts the interaction with calmodulin.

It localises to the cytoplasm. The protein localises to the cytoskeleton. It is found in the cell membrane. Controls cell movement by regulating actin cytoskeleton homeostasis and filopodium and lamellipodium formation. When unphosphorylated, induces cell migration. When phosphorylated by MAPK8, induces actin bundles formation and stabilization, thereby reducing actin plasticity, hence restricting cell movement, including neuronal migration. May be involved in coupling the protein kinase C and calmodulin signal transduction systems. This chain is MARCKS-related protein (MARCKSL1), found in Homo sapiens (Human).